Consider the following 37-residue polypeptide: Cytochrome b6-f complex subunit 5 (37 aa).

The chain crosses the membrane as a helical span at residues 5–25 (FLFGIVLGLIPITLAGLFVTA).

Belongs to the PetG family. In terms of assembly, the 4 large subunits of the cytochrome b6-f complex are cytochrome b6, subunit IV (17 kDa polypeptide, PetD), cytochrome f and the Rieske protein, while the 4 small subunits are PetG, PetL, PetM and PetN. The complex functions as a dimer.

Its subcellular location is the plastid. The protein resides in the chloroplast thylakoid membrane. Component of the cytochrome b6-f complex, which mediates electron transfer between photosystem II (PSII) and photosystem I (PSI), cyclic electron flow around PSI, and state transitions. PetG is required for either the stability or assembly of the cytochrome b6-f complex. The protein is Cytochrome b6-f complex subunit 5 of Solanum lycopersicum (Tomato).